The following is a 782-amino-acid chain: Probable cyclic di-GMP phosphodiesterase PdeI (782 aa).

2 helical membrane-spanning segments follow: residues 12–32 (LIILFLLAALSFIGLFFIINY) and 286–306 (LFYLPFAFIIIVLLVVYLMTT). Residues 527-781 (NIWIARNIRH…AWDKSGKLVK (255 aa)) enclose the EAL domain.

The protein resides in the cell membrane. It catalyses the reaction 3',3'-c-di-GMP + H2O = 5'-phosphoguanylyl(3'-&gt;5')guanosine + H(+). In terms of biological role, phosphodiesterase (PDE) that catalyzes the hydrolysis of cyclic-di-GMP (c-di-GMP) to 5'-pGpG. Overexpression reduces biofilm formation. Cyclic-di-GMP is a second messenger which controls cell surface-associated traits in bacteria. The protein is Probable cyclic di-GMP phosphodiesterase PdeI of Escherichia coli (strain K12).